The primary structure comprises 417 residues: Calreticulin (417 aa).

Residues 1-17 (MLLSVPLLLGLLGLAAA) form the signal peptide. The tract at residues 18 to 197 (EPAVYFKEQF…NSQVESGSLE (180 aa)) is N-domain. Ca(2+) is bound at residue Gln26. Lys48 carries the N6-acetyllysine modification. Ca(2+)-binding residues include Lys62 and Lys64. Lys64 bears the N6-(2-hydroxyisobutyryl)lysine mark. An intrachain disulfide couples Cys105 to Cys137. An alpha-D-glucoside contacts are provided by Tyr109, Lys111, Tyr128, and Asp135. An N6-acetyllysine modification is found at Lys159. A 1-1 repeat occupies 191–202 (VESGSLEDDWDF). Positions 191–255 (VESGSLEDDW…DAKKPEDWDE (65 aa)) are 4 X approximate repeats. The tract at residues 193 to 277 (SGSLEDDWDF…NPEYKGEWKP (85 aa)) is disordered. The P-domain stretch occupies residues 198-308 (DDWDFLPPKK…YSPDANIYAY (111 aa)). Positions 207-251 (KIKDPDAAKPEDWDERAKIDDPTDSKPEDWDKPEHIPDPDAKKPE) are enriched in basic and acidic residues. Lys209 bears the N6-acetyllysine mark. 6 consecutive repeat copies span residues 210 to 221 (DPDAAKPEDWDE), 227 to 238 (DPTDSKPEDWDK), 244 to 255 (DPDAKKPEDWDE), 259 to 269 (GEWEPPVIQNP), 273 to 283 (GEWKPRQIDNP), and 287 to 297 (GTWIHPEIDNP). Positions 237 to 270 (DKPEHIPDPDAKKPEDWDEEMDGEWEPPVIQNPE) are interaction with PPIB. Positions 252–261 (DWDEEMDGEW) are enriched in acidic residues. Residues 259–297 (GEWEPPVIQNPEYKGEWKPRQIDNPDYKGTWIHPEIDNP) are 3 X approximate repeats. Positions 309-417 (DSFAVLGLDL…TTPGQTKDEL (109 aa)) are C-domain. Asp317 is an an alpha-D-glucoside binding site. Position 328 (Asp328) interacts with Ca(2+). The segment at 350–417 (TKASEKQMKD…TTPGQTKDEL (68 aa)) is disordered. Residues 352–379 (ASEKQMKDKQDEEQRLKEEEEDKKRKEE) show a composition bias toward basic and acidic residues. Over residues 380 to 408 (EEAEDKEDEDDRDEDEEDEDEKEEDEEDT) the composition is skewed to acidic residues. The Prevents secretion from ER signature appears at 414 to 417 (KDEL).

It belongs to the calreticulin family. In terms of assembly, monomer. Component of an EIF2 complex at least composed of CELF1/CUGBP1, CALR, CALR3, EIF2S1, EIF2S2, HSP90B1 and HSPA5. Interacts with PDIA3/ERp57 and SPACA9. Interacts with TRIM21. Interacts with NR3C1. Interacts with PPIB. Interacts (via P-domain) with PDIA5. Interacts with GABARAP. Interacts with CLCC1.

The protein localises to the endoplasmic reticulum lumen. The protein resides in the cytoplasm. It localises to the cytosol. Its subcellular location is the cytolytic granule. It is found in the secreted. The protein localises to the extracellular space. The protein resides in the extracellular matrix. It localises to the cell surface. Its subcellular location is the sarcoplasmic reticulum lumen. It is found in the cytoplasmic vesicle. The protein localises to the secretory vesicle. The protein resides in the cortical granule. Functionally, calcium-binding chaperone that promotes folding, oligomeric assembly and quality control in the endoplasmic reticulum (ER) via the calreticulin/calnexin cycle. This lectin interacts transiently with almost all of the monoglucosylated glycoproteins that are synthesized in the ER. Interacts with the DNA-binding domain of NR3C1 and mediates its nuclear export. Involved in maternal gene expression regulation. May participate in oocyte maturation via the regulation of calcium homeostasis. Present in the cortical granules of non-activated oocytes, is exocytosed during the cortical reaction in response to oocyte activation and might participate in the block to polyspermy. This is Calreticulin (CALR) from Cricetulus griseus (Chinese hamster).